The primary structure comprises 144 residues: MAYKHILIAVDLSPESKVLVEKAVSMARPYNAKISLIHVDVNYSDLYTGLIDVNLGDMQKRISEETHHALTELSTNAGYPITETLSGSGDLGQVLVDAIKKYDMDLVVCGHHQDFWSKLMSSARQLINTVHVDMLIVPLRDEEE.

It belongs to the universal stress protein A family. In terms of assembly, homodimer.

The protein resides in the cytoplasm. Its function is as follows. Required for resistance to DNA-damaging agents. The sequence is that of Universal stress protein A (uspA) from Salmonella typhimurium (strain LT2 / SGSC1412 / ATCC 700720).